A 204-amino-acid chain; its full sequence is CASP-like protein 1U3 (204 aa).

Topologically, residues 1-19 (MCEGEKKKDSSSGALYCVN) are cytoplasmic. Residues 20-40 (LALRIVVLGLAVAAAALMATA) traverse the membrane as a helical segment. Over 41–63 (SQCTIFLYYGGPLHTITYKDFGP) the chain is Extracellular. Residues 64 to 84 (FVYLVVASSIGAFMEAIAIFL) traverse the membrane as a helical segment. Over 85 to 97 (TICKKKDGTPAKV) the chain is Cytoplasmic. The helical transmembrane segment at 98-118 (LLPLLDAAVPVLLYSATAAAF) threads the bilayer. Topologically, residues 119 to 146 (AAGDMSYCAVGKRVGVCTTAAAGNFCNQ) are extracellular. The helical transmembrane segment at 147–167 (VHIAMYVSLAAGVALLVAEIV) threads the bilayer. The Cytoplasmic segment spans residues 168 to 204 (KHWPDSGKKKEGGGGGCGSDSDSDKSTPCHHGCHSKH). The tract at residues 173-204 (SGKKKEGGGGGCGSDSDSDKSTPCHHGCHSKH) is disordered.

This sequence belongs to the Casparian strip membrane proteins (CASP) family. Homodimer and heterodimers.

Its subcellular location is the cell membrane. This Oryza sativa subsp. japonica (Rice) protein is CASP-like protein 1U3.